Here is a 73-residue protein sequence, read N- to C-terminus: MKANIHPNYHKITVVMTDGTQYTTRSTWGKEGDTLNLDIDPRTHPAWTGGSQTLVDRGGRLSKFKNRFGNIGM.

This sequence belongs to the bacterial ribosomal protein bL31 family. Type A subfamily. In terms of assembly, part of the 50S ribosomal subunit.

Its function is as follows. Binds the 23S rRNA. This chain is Large ribosomal subunit protein bL31, found in Bartonella tribocorum (strain CIP 105476 / IBS 506).